Here is a 105-residue protein sequence, read N- to C-terminus: Nitrogen fixation nifHD2 region GlnB-like protein 1 (105 aa).

This sequence belongs to the P(II) protein family.

In terms of biological role, could be involved in the regulation of nitrogen fixation. In Methanosarcina barkeri, this protein is Nitrogen fixation nifHD2 region GlnB-like protein 1.